The primary structure comprises 270 residues: Transmembrane protein 176B (270 aa).

4 helical membrane-spanning segments follow: residues 65 to 85, 95 to 115, 127 to 147, and 209 to 229; these read LALG…GVCL, ASGC…GAIV, VSSL…VLCV, and LFLA…GVGL. Phosphoserine is present on residues Ser236, Ser245, Ser254, and Ser258. The disordered stretch occupies residues 237–270; sequence SQPLNEEGSEKRLLGENSVPPSPSREQTSTAIVL. Residues 260–270 show a composition bias toward polar residues; it reads SREQTSTAIVL.

Belongs to the TMEM176 family.

It localises to the nucleus membrane. In terms of biological role, may play a role in the process of maturation of dendritic cells. Required for the development of cerebellar granule cells. The protein is Transmembrane protein 176B (TMEM176B) of Pongo abelii (Sumatran orangutan).